We begin with the raw amino-acid sequence, 254 residues long: Alcohol dehydrogenase 2 (254 aa).

10–33 (FVAGLGGIGLDTSREIVKSGPKNL) contacts NAD(+). S138 provides a ligand contact to substrate. Residue Y151 is the Proton acceptor of the active site.

The protein belongs to the short-chain dehydrogenases/reductases (SDR) family. As to quaternary structure, homodimer.

The catalysed reaction is a primary alcohol + NAD(+) = an aldehyde + NADH + H(+). The enzyme catalyses a secondary alcohol + NAD(+) = a ketone + NADH + H(+). This Drosophila hydei (Fruit fly) protein is Alcohol dehydrogenase 2 (Adh2).